Here is a 220-residue protein sequence, read N- to C-terminus: Fructose-6-phosphate aldolase (220 aa).

The Schiff-base intermediate with substrate role is filled by K85.

Belongs to the transaldolase family. Type 3A subfamily. Homodecamer.

The protein resides in the cytoplasm. The enzyme catalyses beta-D-fructose 6-phosphate = dihydroxyacetone + D-glyceraldehyde 3-phosphate. Catalyzes the reversible formation of fructose 6-phosphate from dihydroxyacetone and D-glyceraldehyde 3-phosphate via an aldolization reaction. This Salmonella gallinarum (strain 287/91 / NCTC 13346) protein is Fructose-6-phosphate aldolase.